The chain runs to 504 residues: Zinc finger CCCH domain-containing protein 18 (504 aa).

A coiled-coil region spans residues 40 to 69 (SNADLLEVHEELLAAIKDAEEGLLHLKRSR). Residues 77–105 (IFPNQEPTSEAPEVAVDPPDDVEPEPLEP) form a disordered region. Positions 94–104 (PPDDVEPEPLE) are enriched in acidic residues. The C3H1-type zinc-finger motif lies at 146-173 (SENMSMCKFFLQQRCRFGSNCRLSHGIV). The disordered stretch occupies residues 230-276 (GSSARLPSDSLSISEYADESDEDGEGSSSDEGSDFSEDGDQEDESVH). Composition is skewed to acidic residues over residues 245–254 (YADESDEDGE) and 260–272 (EGSD…DQED). The G-patch domain maps to 304–350 (TRGVASKMMAKMGYREGMGLGVSGQGMLDPIPVKVLPPKQSLDHAVA). Disordered regions lie at residues 351–390 (ASEV…EEER), 406–432 (AEGS…DRRS), and 482–504 (EATH…WLKF). The segment covering 361–374 (GKKRSRGGKRKREK) has biased composition (basic residues). Composition is skewed to basic and acidic residues over residues 375-390 (KFAE…EEER), 413-432 (SKKD…DRRS), and 493-504 (ARKEKEKKWLKF). Residues 430–500 (RRSLLAYDDE…AVARKEKEKK (71 aa)) adopt a coiled-coil conformation.

This is Zinc finger CCCH domain-containing protein 18 from Oryza sativa subsp. japonica (Rice).